A 1766-amino-acid chain; its full sequence is Putative ATP-dependent RNA helicase R366 (1766 aa).

The interval 209-239 is disordered; it reads KSSSNQNSNQSNQESNESNQEPNESNQEINQ. Residues 210 to 239 are compositionally biased toward low complexity; the sequence is SSSNQNSNQSNQESNESNQEPNESNQEINQ. In terms of domain architecture, Helicase ATP-binding spans 656-865; that stretch reads YHHYSNNRVL…RYYRRINDNR (210 aa). 669–676 is a binding site for ATP; sequence GATGVGKS. The short motif at 812–815 is the DEAH box element; it reads DEAH. The Helicase C-terminal domain maps to 947–1116; it reads DIHKSIKAIN…TMVKLIKSYP (170 aa).

This sequence belongs to the DEAD box helicase family. DEAH subfamily.

It carries out the reaction ATP + H2O = ADP + phosphate + H(+). This chain is Putative ATP-dependent RNA helicase R366, found in Acanthamoeba polyphaga mimivirus (APMV).